The primary structure comprises 715 residues: Transcription factor MST12 (715 aa).

Positions 214–224 are enriched in low complexity; the sequence is SSSFNAQQVSF. Disordered regions lie at residues 214–243, 439–469, and 518–539; these read SSSF…MPPP, AAHR…NSPP, and PMPS…AQGG. C2H2-type zinc fingers lie at residues 564–588 and 594–616; these read HSCP…VRTH and YICP…KRTH. Residues 632-691 are disordered; sequence EEEYSGDDHLGSLEEASPTSEGGYVTSSLNSAMAHSNTSQHPGSNAVSPNPGPMSHAPTY. Polar residues predominate over residues 648-679; sequence SPTSEGGYVTSSLNSAMAHSNTSQHPGSNAVS.

Belongs to the STE12 transcription factor family.

It localises to the nucleus. In terms of biological role, transcription factor that may function downstream of PMK1 to regulate genes involved in infectious hyphae growth. Is not essential for vegetative growth, conidiation or appressorium formation. May be involved in the regulation of the expression of the cell surface sensor MSB2. This is Transcription factor MST12 from Pyricularia oryzae (strain 70-15 / ATCC MYA-4617 / FGSC 8958) (Rice blast fungus).